Here is a 741-residue protein sequence, read N- to C-terminus: Methionine--tRNA ligase (741 aa).

Residues Pro11–His21 carry the 'HIGH' region motif. Residues Cys143, Cys146, Cys156, and Cys159 each contribute to the Zn(2+) site. Residues Lys345–Ser349 carry the 'KMSKS' region motif. Thr348 contacts ATP. A tRNA-binding domain is found at Glu641–Arg741.

This sequence belongs to the class-I aminoacyl-tRNA synthetase family. MetG type 1 subfamily. In terms of assembly, homodimer. Zn(2+) serves as cofactor.

The protein localises to the cytoplasm. The catalysed reaction is tRNA(Met) + L-methionine + ATP = L-methionyl-tRNA(Met) + AMP + diphosphate. Is required not only for elongation of protein synthesis but also for the initiation of all mRNA translation through initiator tRNA(fMet) aminoacylation. The sequence is that of Methionine--tRNA ligase from Thermococcus kodakarensis (strain ATCC BAA-918 / JCM 12380 / KOD1) (Pyrococcus kodakaraensis (strain KOD1)).